Here is a 647-residue protein sequence, read N- to C-terminus: Sodium/nucleoside cotransporter 1 (647 aa).

At 1–79 the chain is on the cytoplasmic side; that stretch reads MEDNTPRQRD…VRRFCREHTQ (79 aa). The tract at residues 34–58 is disordered; that stretch reads EGRAPGSDSSPAEVGGGWSKAGPEH. Residues 80-103 form a helical membrane-spanning segment; that stretch reads LFRWICTGLLCTAFAAFLLIACLL. The Extracellular portion of the chain corresponds to 104-108; it reads DFQRA. The helical transmembrane segment at 109-127 threads the bilayer; that stretch reads LALFVLFCVVLFFLAHSLL. Residues 128-146 lie on the Cytoplasmic side of the membrane; the sequence is KRLLGPKLLRCVKPLRHPC. A helical transmembrane segment spans residues 147 to 166; that stretch reads LNLWFKRGLALAAFLGLVLW. Topologically, residues 167–177 are extracellular; the sequence is LVLDTAQRPEQ. Residues 178–194 form a helical membrane-spanning segment; it reads LVSFGGICVFILLLFAG. Residues 195-200 are Cytoplasmic-facing; sequence SKHHRA. The helical transmembrane segment at 201–221 threads the bilayer; that stretch reads VSWRAVSWGLGLQFALGLFVI. Over 222 to 260 the chain is Extracellular; sequence RTEPGFIAFQWLGDQIQIFLSYTEAGSSFVFGEALVKDV. A helical membrane pass occupies residues 261–282; the sequence is FAFQVLPIIVFFSCAMSVLYYV. Residues 283–293 lie on the Cytoplasmic side of the membrane; that stretch reads GLMQWVILKIS. Residues 294–317 traverse the membrane as a helical segment; sequence WLMQATMGTTATETLSVAGNIFVS. Residues 318–336 lie on the Extracellular side of the membrane; it reads QTEAPLLIRPYLADMTLSE. A helical membrane pass occupies residues 337-359; sequence IHVVMTGGYATIAGSLLGAYISF. Residues 360–365 lie on the Cytoplasmic side of the membrane; the sequence is GIDAAS. A helical transmembrane segment spans residues 366-385; sequence LIAASVMAAPCALALSKLVY. Residues 386–422 are Extracellular-facing; sequence PEVEESKFKREEGVKLTYGDAQNLLEAASSGAAMSVR. The helical transmembrane segment at 423–445 threads the bilayer; sequence VVTNIAANLIAFLAVLAFINAAL. The Cytoplasmic portion of the chain corresponds to 446 to 456; that stretch reads SWLGDMVDVQG. The chain crosses the membrane as a helical span at residues 457 to 478; sequence LSFQLICSYVLRPVAFLMGVAW. At 479 to 533 the chain is on the extracellular side; it reads EDCPVVAELLGMKLFLNEFVAYQELSGYKQRRLAGAEEWVGSRKQWISVRAEILT. A helical transmembrane segment spans residues 534 to 557; that stretch reads TYALCGFANFSSIGIMLGGLTSMV. Residues 558-568 lie on the Cytoplasmic side of the membrane; sequence PQRKGDFSQIV. A helical membrane pass occupies residues 569 to 591; the sequence is LRALCTGACVSLVNACVAGILYV. Residues 592 to 647 are Extracellular-facing; sequence PRGAEVDCVSFLNTTLSSSSFEVYQCCRQFFQSTSLEFSPEALDNCCRFYNHTICV. N604 and N642 each carry an N-linked (GlcNAc...) asparagine glycan.

The protein belongs to the concentrative nucleoside transporter (CNT) (TC 2.A.41) family. Post-translationally, N-glycosylated. N-glycosylation is required for localization to the plasma membrane and the transporter activity.

It localises to the cell membrane. Its subcellular location is the apical cell membrane. It catalyses the reaction uridine(out) + Na(+)(out) = uridine(in) + Na(+)(in). It carries out the reaction thymidine(out) + Na(+)(out) = thymidine(in) + Na(+)(in). The enzyme catalyses cytidine(out) + Na(+)(out) = cytidine(in) + Na(+)(in). The catalysed reaction is adenosine(out) + Na(+)(out) = adenosine(in) + Na(+)(in). Its activity is regulated as follows. Due to its high apparent affinity but slow transport, adenosine could act as a negative regulator of pyrimidine transport under some conditions. Its function is as follows. Sodium and pyrimidine nucleoside symporter of the plasma membrane that imports uridine, thymidine and cytidine into cells by coupling their transport to the transmembrane sodium electrochemical gradient. Also transports adenosine, an atypical substrate transported with high apparent affinity, but low maximum velocity. Therefore, exhibits the transport characteristics of the nucleoside transport system cit or N2 subtype (N2/cit). Involved in renal nucleoside (re)absorption. The polypeptide is Sodium/nucleoside cotransporter 1 (SLC28A1) (Sus scrofa (Pig)).